The sequence spans 154 residues: Ubiquitin-like protein 4A-A (154 aa).

The Ubiquitin-like domain occupies M1–E76.

Component of the BAT3 complex.

The protein resides in the cytoplasm. It localises to the cytosol. In terms of biological role, component of the BAT3 complex, a multiprotein complex involved in the post-translational delivery of tail-anchored (TA) membrane proteins to the endoplasmic reticulum membrane. TA membrane proteins, also named type II transmembrane proteins, contain a single C-terminal transmembrane region. This chain is Ubiquitin-like protein 4A-A (ubl4aa), found in Salmo salar (Atlantic salmon).